The following is a 156-amino-acid chain: Transcription antitermination protein NusB (156 aa).

Belongs to the NusB family.

Functionally, involved in transcription antitermination. Required for transcription of ribosomal RNA (rRNA) genes. Binds specifically to the boxA antiterminator sequence of the ribosomal RNA (rrn) operons. This is Transcription antitermination protein NusB from Rickettsia rickettsii (strain Iowa).